The primary structure comprises 236 residues: Pyridoxal phosphate homeostasis protein (236 aa).

An N6-(pyridoxal phosphate)lysine modification is found at Lys36.

This sequence belongs to the pyridoxal phosphate-binding protein YggS/PROSC family.

Pyridoxal 5'-phosphate (PLP)-binding protein, which is involved in PLP homeostasis. In Vibrio cholerae serotype O1 (strain ATCC 39315 / El Tor Inaba N16961), this protein is Pyridoxal phosphate homeostasis protein.